The chain runs to 217 residues: Neuron-specific vesicular protein calcyon (217 aa).

The interval 1 to 25 (MVKLGCSFSGKPGKDPGDQDGAAMD) is disordered. Topologically, residues 1 to 87 (MVKLGCSFSG…EEGRRLPTAR (87 aa)) are extracellular. N-linked (GlcNAc...) asparagine glycosylation occurs at Asn73. The chain crosses the membrane as a helical span at residues 88 to 108 (MIAFAMALLGCVLIMYKAIWY). At 109-217 (DQFTCPDGFL…AGSAAPPPAQ (109 aa)) the chain is on the cytoplasmic side. The segment at 162–217 (PAAWGDGYRAAKEERKGPTQAGAAAAATEPPGKPSAKAEKEAARKAAGSAAPPPAQ) is disordered.

This sequence belongs to the NSG family. In terms of assembly, interacts with CLTA. In terms of processing, glycosylated. Expressed in the pyramidal cells of the prefrontal cortex, in hypothalamus and in caudate nucleus. No expression in spleen. Up-regulated in the prefrontal cortex of schizophrenic patients with nearly twice the levels of non-schizophrenics.

The protein localises to the cytoplasmic vesicle membrane. It localises to the cell membrane. Interacts with clathrin light chain A and stimulates clathrin self-assembly and clathrin-mediated endocytosis. The protein is Neuron-specific vesicular protein calcyon (CALY) of Homo sapiens (Human).